A 431-amino-acid chain; its full sequence is Enolase (431 aa).

Gln163 contacts (2R)-2-phosphoglycerate. Glu205 (proton donor) is an active-site residue. Positions 242, 288, and 315 each coordinate Mg(2+). Residues Lys340, Arg369, Ser370, and Lys391 each coordinate (2R)-2-phosphoglycerate. The Proton acceptor role is filled by Lys340.

The protein belongs to the enolase family. Requires Mg(2+) as cofactor.

The protein localises to the cytoplasm. The protein resides in the secreted. Its subcellular location is the cell surface. The enzyme catalyses (2R)-2-phosphoglycerate = phosphoenolpyruvate + H2O. The protein operates within carbohydrate degradation; glycolysis; pyruvate from D-glyceraldehyde 3-phosphate: step 4/5. Its function is as follows. Catalyzes the reversible conversion of 2-phosphoglycerate (2-PG) into phosphoenolpyruvate (PEP). It is essential for the degradation of carbohydrates via glycolysis. The sequence is that of Enolase from Bacillus cereus (strain AH187).